A 111-amino-acid chain; its full sequence is Cytochrome c (111 aa).

Alanine 1 bears the N-acetylalanine mark. 3 residues coordinate heme c: cysteine 22, cysteine 25, and histidine 26. Lysine 80 is subject to N6,N6,N6-trimethyllysine. Methionine 88 is a binding site for heme c. At lysine 94 the chain carries N6,N6,N6-trimethyllysine.

Belongs to the cytochrome c family. In terms of processing, binds 1 heme c group covalently per subunit.

It localises to the mitochondrion intermembrane space. In terms of biological role, electron carrier protein. The oxidized form of the cytochrome c heme group can accept an electron from the heme group of the cytochrome c1 subunit of cytochrome reductase. Cytochrome c then transfers this electron to the cytochrome oxidase complex, the final protein carrier in the mitochondrial electron-transport chain. The polypeptide is Cytochrome c (Sesamum indicum (Oriental sesame)).